Reading from the N-terminus, the 327-residue chain is GTPase Obg (327 aa).

The region spanning 2-160 is the Obg domain; the sequence is HTFKDSLNIT…LDLRLELVLI (159 aa). Positions 161 to 326 constitute an OBG-type G domain; it reads ADIGLVGLPN…LVNELFALSR (166 aa). GTP contacts are provided by residues 167 to 174, 192 to 196, 213 to 216, 280 to 283, and 307 to 309; these read GLPNAGKS, FTTKV, DVPG, NKLD, and SIY. S174 and T194 together coordinate Mg(2+).

It belongs to the TRAFAC class OBG-HflX-like GTPase superfamily. OBG GTPase family. In terms of assembly, monomer. Mg(2+) serves as cofactor.

It is found in the cytoplasm. An essential GTPase which binds GTP, GDP and possibly (p)ppGpp with moderate affinity, with high nucleotide exchange rates and a fairly low GTP hydrolysis rate. Plays a role in control of the cell cycle, stress response, ribosome biogenesis and in those bacteria that undergo differentiation, in morphogenesis control. The sequence is that of GTPase Obg from Borrelia turicatae (strain 91E135).